We begin with the raw amino-acid sequence, 358 residues long: Peptide chain release factor 1 (358 aa).

An N5-methylglutamine modification is found at Q237.

It belongs to the prokaryotic/mitochondrial release factor family. In terms of processing, methylated by PrmC. Methylation increases the termination efficiency of RF1.

The protein resides in the cytoplasm. Peptide chain release factor 1 directs the termination of translation in response to the peptide chain termination codons UAG and UAA. The chain is Peptide chain release factor 1 from Mycoplasma mobile (strain ATCC 43663 / 163K / NCTC 11711) (Mesomycoplasma mobile).